The primary structure comprises 29 residues: Cyclotide mden-A (29 aa).

A cross-link (cyclopeptide (Gly-Asn)) is located at residues 1–29 (GIPTCGETCTLGTCNTPGCTCSWPICTKN). Cystine bridges form between Cys5-Cys19, Cys9-Cys21, and Cys14-Cys26.

Belongs to the cyclotide family. Moebius subfamily. Post-translationally, this is a cyclic peptide.

Functionally, probably participates in a plant defense mechanism. This is Cyclotide mden-A from Melicytus dentatus (Tree violet).